The following is a 225-amino-acid chain: Octanoyltransferase (225 aa).

The region spanning 37–217 (SDTPDEFWVV…ELASLIGYQT (181 aa)) is the BPL/LPL catalytic domain. Substrate is bound by residues 76 to 83 (RGGQVTYH), 148 to 150 (SLG), and 161 to 163 (GLA). Cys179 (acyl-thioester intermediate) is an active-site residue.

Belongs to the LipB family.

It localises to the cytoplasm. It carries out the reaction octanoyl-[ACP] + L-lysyl-[protein] = N(6)-octanoyl-L-lysyl-[protein] + holo-[ACP] + H(+). The protein operates within protein modification; protein lipoylation via endogenous pathway; protein N(6)-(lipoyl)lysine from octanoyl-[acyl-carrier-protein]: step 1/2. Catalyzes the transfer of endogenously produced octanoic acid from octanoyl-acyl-carrier-protein onto the lipoyl domains of lipoate-dependent enzymes. Lipoyl-ACP can also act as a substrate although octanoyl-ACP is likely to be the physiological substrate. This is Octanoyltransferase from Aeromonas salmonicida (strain A449).